The following is a 525-amino-acid chain: Nucleolar complex protein 4 homolog B (525 aa).

Residues 1 to 10 (MAARKAKHAF) show a composition bias toward basic residues. Residues 1 to 21 (MAARKAKHAFRSQATQSDAER) are disordered. 3 helical membrane-spanning segments follow: residues 307–327 (AAYD…FILI), 358–378 (FFHL…LVAA), and 386–406 (LALT…CNLI).

It belongs to the CBF/MAK21 family.

Its subcellular location is the nucleus membrane. The protein resides in the nucleus. The protein localises to the nucleolus. This is Nucleolar complex protein 4 homolog B (noc4l-b) from Xenopus laevis (African clawed frog).